Here is a 176-residue protein sequence, read N- to C-terminus: 2-C-methyl-D-erythritol 2,4-cyclodiphosphate synthase (176 aa).

Asp23, His25, and His60 together coordinate a divalent metal cation. 23–25 provides a ligand contact to 4-CDP-2-C-methyl-D-erythritol 2-phosphate; that stretch reads DSH. 149–152 provides a ligand contact to 4-CDP-2-C-methyl-D-erythritol 2-phosphate; that stretch reads TSGE.

The protein belongs to the IspF family. In terms of assembly, homotrimer. The cofactor is a divalent metal cation.

The catalysed reaction is 4-CDP-2-C-methyl-D-erythritol 2-phosphate = 2-C-methyl-D-erythritol 2,4-cyclic diphosphate + CMP. It functions in the pathway isoprenoid biosynthesis; isopentenyl diphosphate biosynthesis via DXP pathway; isopentenyl diphosphate from 1-deoxy-D-xylulose 5-phosphate: step 4/6. Involved in the biosynthesis of isopentenyl diphosphate (IPP) and dimethylallyl diphosphate (DMAPP), two major building blocks of isoprenoid compounds. Catalyzes the conversion of 4-diphosphocytidyl-2-C-methyl-D-erythritol 2-phosphate (CDP-ME2P) to 2-C-methyl-D-erythritol 2,4-cyclodiphosphate (ME-CPP) with a corresponding release of cytidine 5-monophosphate (CMP). The protein is 2-C-methyl-D-erythritol 2,4-cyclodiphosphate synthase of Chlamydia caviae (strain ATCC VR-813 / DSM 19441 / 03DC25 / GPIC) (Chlamydophila caviae).